The primary structure comprises 456 residues: Myricetin 3-O-rhamnosyltransferase UGT77B2 (456 aa).

Histidine 19 serves as the catalytic Proton acceptor. Histidine 19 is a binding site for an anthocyanidin. The active-site Charge relay is aspartate 116. Residue histidine 147 participates in an anthocyanidin binding. 5 residues coordinate UDP-beta-L-rhamnose: threonine 279, alanine 334, histidine 351, asparagine 355, and glutamate 359. Alanine 374 contributes to the an anthocyanidin binding site.

The protein belongs to the UDP-glycosyltransferase family. Expressed in young cromes.

The enzyme catalyses myricetin + UDP-beta-L-rhamnose = myricetin 3-O-alpha-L-rhamnoside + UDP + H(+). It functions in the pathway flavonoid metabolism. Functionally, rhamnosyltransferase involved in montbretin A (MbA) biosynthesis. Catalyzes the 3-O rhamnosylation of myricetin to produce myricetin 3-O-alpha-L-rhamnoside (MR), a precursor of MbA. MbA is a potent inhibitor of human pancreatic alpha-amylase and is being developed as drug candidate to treat type-2 diabetes. In vitro, is able to transfer UDP-glucose and UDP-xylose with 50-fold less efficiency compared with UDP-rhamnose. In vitro, can use kaempferol or quercetin as substrates, although these two flavonols may not be physiological substrates in vivo. This chain is Myricetin 3-O-rhamnosyltransferase UGT77B2, found in Crocosmia x crocosmiiflora (Montbretia).